Reading from the N-terminus, the 75-residue chain is Small ribosomal subunit protein bS18 (75 aa).

It belongs to the bacterial ribosomal protein bS18 family. Part of the 30S ribosomal subunit. Forms a tight heterodimer with protein bS6.

In terms of biological role, binds as a heterodimer with protein bS6 to the central domain of the 16S rRNA, where it helps stabilize the platform of the 30S subunit. The chain is Small ribosomal subunit protein bS18 from Thermosipho melanesiensis (strain DSM 12029 / CIP 104789 / BI429).